The sequence spans 757 residues: Polyribonucleotide nucleotidyltransferase (757 aa).

Mg(2+) contacts are provided by D525 and D531. A KH domain is found at 591 to 650 (PRVISVNIPVDKIGELIGPKGKTINAIQDETGADISIEEDGAVYIGAVDGPSAEAARAQV). Residues 662-734 (GESFLGTVVK…DRGKLSLAPV (73 aa)) form the S1 motif domain. The disordered stretch occupies residues 736–757 (EEAADQEGSAAASDGPEAPAEG).

It belongs to the polyribonucleotide nucleotidyltransferase family. Mg(2+) is required as a cofactor.

Its subcellular location is the cytoplasm. It catalyses the reaction RNA(n+1) + phosphate = RNA(n) + a ribonucleoside 5'-diphosphate. In terms of biological role, involved in mRNA degradation. Catalyzes the phosphorolysis of single-stranded polyribonucleotides processively in the 3'- to 5'-direction. This Clavibacter sepedonicus (Clavibacter michiganensis subsp. sepedonicus) protein is Polyribonucleotide nucleotidyltransferase.